Here is a 149-residue protein sequence, read N- to C-terminus: Ribosomal RNA large subunit methyltransferase H (149 aa).

S-adenosyl-L-methionine contacts are provided by residues Leu-71, Gly-98, and 117–122 (LSKMTL).

The protein belongs to the RNA methyltransferase RlmH family. Homodimer.

It is found in the cytoplasm. The enzyme catalyses pseudouridine(1915) in 23S rRNA + S-adenosyl-L-methionine = N(3)-methylpseudouridine(1915) in 23S rRNA + S-adenosyl-L-homocysteine + H(+). Functionally, specifically methylates the pseudouridine at position 1915 (m3Psi1915) in 23S rRNA. This is Ribosomal RNA large subunit methyltransferase H from Campylobacter fetus subsp. fetus (strain 82-40).